The primary structure comprises 350 residues: Thymidine kinase (350 aa).

15–22 (GAHGLGKT) serves as a coordination point for ATP. Glu-44 serves as the catalytic Proton acceptor. Residue Gln-88 coordinates substrate. Arg-178 is a binding site for ATP. Residue Arg-184 participates in substrate binding.

The protein belongs to the herpesviridae thymidine kinase family. Homodimer.

The catalysed reaction is thymidine + ATP = dTMP + ADP + H(+). Functionally, catalyzes the transfer of the gamma-phospho group of ATP to thymidine to generate dTMP in the salvage pathway of pyrimidine synthesis. The dTMP serves as a substrate for DNA polymerase during viral DNA replication. Allows the virus to be reactivated and to grow in non-proliferative cells lacking a high concentration of phosphorylated nucleic acid precursors. The protein is Thymidine kinase of Bos taurus (Bovine).